The chain runs to 66 residues: Large ribosomal subunit protein bL35 (66 aa).

Residues 1 to 15 are compositionally biased toward basic residues; sequence MPKMKTKSSAKKRFK. Residues 1 to 32 are disordered; the sequence is MPKMKTKSSAKKRFKMTATGKVRAGQAGKRHG.

It belongs to the bacterial ribosomal protein bL35 family.

The chain is Large ribosomal subunit protein bL35 from Dinoroseobacter shibae (strain DSM 16493 / NCIMB 14021 / DFL 12).